A 720-amino-acid chain; its full sequence is MGNSYSTSQQEYYITGSSNQLTPTTTTRAHSSGTLKAVAELPIGMNPSKVEIDSISYTDFLIDDIFDEEHDGLVDWIGRMVQKNSRIKGVVHITDKVISYVSKAAQFAKSFIGANKLAPDLEVSDCIDSLEAFAKAFSMFVQTHAPRDTSDAKYHGHDYGDPIDSYFDDINETYTKWASDSRGKLITGATIDVSAGALIPLLIAASQIIALSSKIGLKGQADIFGSTIECNSYHVLPGQTQLARIGKILKANESLQPRVIDTIKAHGHNLGLMTNVKGHDHHSYFSAPTLVSDIVENGPLKGIHPMKIIRHRANIVMQNRHNYSCDLLTLPLDNWNINTAPWMLRHFETEAMTIFDVRPVPSKLIQYTTASIFPTATKATIPGVAGAGATLITVYPTIYSLPPFFSKFNGNIIHRYSYIISYVREETYVFNINDVYAGVVVSRSDIDSLFITGKCVVFSAPRTSQNLTIHTIRVSGVVSFHDFKPIVPSTTNVSEILFEKQHGFVPAFIVKDSSLTPTSDASAAISIVGSHTYFHLSSGSLPINDYTVNPSDGSSTKVKNFLDAIALLPFSEMALPFSIDTLWREYSSGVVAYLDMTIFNDEFFHNSHPIICLSVIDYLKTNTSGFYYYNDLLQPAWYIPSNVRRVLRYMYAGIRLWLINDKRQNPLLGLTFKGDNARTLKYFVGLLVSCAHGLSMEYPTMDSEYDGRKQWTQIASLAVG.

Residue Gly2 is the site of N-myristoyl glycine; by host attachment.

This is an uncharacterized protein from Cryphonectria parasitica mycoreovirus 1 (strain 9B21) (CpMYRV-1).